Consider the following 187-residue polypeptide: Protein GrpE (187 aa).

Residues M1–C15 are compositionally biased toward basic and acidic residues. The tract at residues M1–E40 is disordered.

Belongs to the GrpE family. In terms of assembly, homodimer.

It is found in the cytoplasm. Its function is as follows. Participates actively in the response to hyperosmotic and heat shock by preventing the aggregation of stress-denatured proteins, in association with DnaK and GrpE. It is the nucleotide exchange factor for DnaK and may function as a thermosensor. Unfolded proteins bind initially to DnaJ; upon interaction with the DnaJ-bound protein, DnaK hydrolyzes its bound ATP, resulting in the formation of a stable complex. GrpE releases ADP from DnaK; ATP binding to DnaK triggers the release of the substrate protein, thus completing the reaction cycle. Several rounds of ATP-dependent interactions between DnaJ, DnaK and GrpE are required for fully efficient folding. The polypeptide is Protein GrpE (Alkaliphilus oremlandii (strain OhILAs) (Clostridium oremlandii (strain OhILAs))).